The chain runs to 320 residues: Polyprenyl transferase pyr6 (320 aa).

Transmembrane regions (helical) follow at residues K22–S42, G60–I80, L101–M121, G127–G147, L155–W175, and P186–F206. N224 is a glycosylation site (N-linked (GlcNAc...) asparagine). The helical transmembrane segment at Y233 to L253 threads the bilayer. The N-linked (GlcNAc...) asparagine glycan is linked to N256. 2 helical membrane passes run W260–F280 and F296–S316.

The protein belongs to the UbiA prenyltransferase family. Mg(2+) is required as a cofactor.

The protein localises to the membrane. It catalyses the reaction 4-hydroxy-6-(pyridin-3-yl)-2H-pyran-2-one + (2E,6E)-farnesyl diphosphate = 4-hydroxy-3-[(2E,6E)-farnesyl]-6-(pyridin-3-yl)-2H-pyran-2-one + diphosphate. It functions in the pathway secondary metabolite biosynthesis; terpenoid biosynthesis. In terms of biological role, polyprenyl transferase; part of the gene cluster that mediates the biosynthesis of pyripyropene A, a specific human acyl-coenzyme A:cholesterol acyltransferase 2 inhibitor. The first step of the pathway is the synthesis of nicotinyl-CoA from nicotinic acid by the nicotinic acid-CoA ligase pyr1. Nicotinyl-CoA is then a substrate of polyketide synthase pyr2 to produce 4-hydroxy-6-(3-pyridinyl)-2H-pyran-2-one (HPPO) which is further prenylated by the polyprenyl transferase pyr6 to yield farnesyl-HPPO. The next steps consist of an epoxidation of farnesyl-HPPO to epoxyfarnesyl-HPPO by FAD-dependent monooxygenase pyr5 and a cyclization of the terpenoid portion by the terpene cyclase pyr4 to yield deacetyl-pyripyropene E. The 2 cytochrome P450 monooxygenases pyr3 and pyr9, and the 2 acetyltransferases pyr7 and pyr8 are involved in the conversion of deacetyl-pyripyropene E into pyripyropene A through several cycles of oxidation and acetylation steps. Pyr7 acetylates deacetyl-pyripyropene E to pyripyropene E which is oxidized to 11-deacetyl-pyripyropene O by pyr3, which is in turn acetylated into pyripyropene O by pyr8. Pyripyropene O is then oxidized to deacetyl-pyripyropene A by pyr9. Deacetyl-pyripyropene A is finally acetylated to pyripyropene A by pyr8. The sequence is that of Polyprenyl transferase pyr6 from Aspergillus fumigatus (strain ATCC MYA-4609 / CBS 101355 / FGSC A1100 / Af293) (Neosartorya fumigata).